The chain runs to 36 residues: Kappa-actitoxin-Avd6a (36 aa).

The ShKT domain occupies Cys2–Cys36. Intrachain disulfides connect Cys2–Cys36, Cys11–Cys29, and Cys20–Cys33. Residues Lys24–Tyr25 form a crucial for binding to potassium channels region.

This sequence belongs to the sea anemone type 1 potassium channel toxin family. Type 1b subfamily.

The protein localises to the secreted. The protein resides in the nematocyst. In terms of biological role, blocks voltage-gated potassium channels Kv1.2/KCNA2 (IC(50)=140 nM). This chain is Kappa-actitoxin-Avd6a, found in Anemonia sulcata (Mediterranean snakelocks sea anemone).